The primary structure comprises 280 residues: Probable holocytochrome-c-type synthase (280 aa).

The tract at residues 1-95 (MGSSQSTPKV…FALPTKREKS (95 aa)) is disordered. HRM repeat units lie at residues 35–40 (QCPLTP) and 56–61 (ACPVGA).

This sequence belongs to the cytochrome c-type heme lyase family.

It localises to the mitochondrion inner membrane. The enzyme catalyses holo-[cytochrome c] = apo-[cytochrome c] + heme b. In terms of biological role, probable lyase that catalyzes the covalent linking of the heme group to the cytochrome C apoprotein to produce the mature functional cytochrome. The protein is Probable holocytochrome-c-type synthase (cchl-1) of Caenorhabditis elegans.